Here is a 225-residue protein sequence, read N- to C-terminus: Membrane protein (225 aa).

The Virion surface portion of the chain corresponds to 1-20 (MPNETNCTLDFEQSVQLFKE). Residues 21–41 (YNLFITAFLLFLTIILQYGYA) traverse the membrane as a helical segment. Over 42-51 (TRSKVIYTLK) the chain is Intravirion. The helical transmembrane segment at 52 to 72 (MIVLWCFWPLNIAVGVISCTY) threads the bilayer. The Virion surface portion of the chain corresponds to 73–77 (PPNTG). A helical membrane pass occupies residues 78 to 98 (GLVAAIILTVFACLSFVGYWI). Over 99-225 (QSIRLFKRCR…VATGGSSLYT (127 aa)) the chain is Intravirion.

Belongs to the gammacoronaviruses M protein family. In terms of assembly, homomultimer. Interacts with envelope E protein in the budding compartment of the host cell, which is located between endoplasmic reticulum and the Golgi complex. Forms a complex with HE and S proteins. Interacts with nucleocapsid N protein. This interaction probably participates in RNA packaging into the virus.

It localises to the virion membrane. It is found in the host Golgi apparatus membrane. In terms of biological role, component of the viral envelope that plays a central role in virus morphogenesis and assembly via its interactions with other viral proteins. This Avian infectious bronchitis virus (strain Beaudette) (IBV) protein is Membrane protein.